A 351-amino-acid polypeptide reads, in one-letter code: Biotin synthase (351 aa).

The Radical SAM core domain maps to 48–265 (NKVRIHILDN…LCMFRLINPD (218 aa)). The [4Fe-4S] cluster site is built by C63, C67, and C70. Residues C107, C139, C199, and R269 each contribute to the [2Fe-2S] cluster site.

This sequence belongs to the radical SAM superfamily. Biotin synthase family. In terms of assembly, homodimer. [4Fe-4S] cluster is required as a cofactor. [2Fe-2S] cluster serves as cofactor.

The catalysed reaction is (4R,5S)-dethiobiotin + (sulfur carrier)-SH + 2 reduced [2Fe-2S]-[ferredoxin] + 2 S-adenosyl-L-methionine = (sulfur carrier)-H + biotin + 2 5'-deoxyadenosine + 2 L-methionine + 2 oxidized [2Fe-2S]-[ferredoxin]. The protein operates within cofactor biosynthesis; biotin biosynthesis; biotin from 7,8-diaminononanoate: step 2/2. Its function is as follows. Catalyzes the conversion of dethiobiotin (DTB) to biotin by the insertion of a sulfur atom into dethiobiotin via a radical-based mechanism. The sequence is that of Biotin synthase from Leptospira interrogans serogroup Icterohaemorrhagiae serovar Lai (strain 56601).